We begin with the raw amino-acid sequence, 358 residues long: UDP-N-acetylglucosamine--N-acetylmuramyl-(pentapeptide) pyrophosphoryl-undecaprenol N-acetylglucosamine transferase (358 aa).

Residues 11–13 (TGG), N122, R161, S189, I243, 262–267 (ALTVCE), and Q288 each bind UDP-N-acetyl-alpha-D-glucosamine.

The protein belongs to the glycosyltransferase 28 family. MurG subfamily.

Its subcellular location is the cell inner membrane. The catalysed reaction is di-trans,octa-cis-undecaprenyl diphospho-N-acetyl-alpha-D-muramoyl-L-alanyl-D-glutamyl-meso-2,6-diaminopimeloyl-D-alanyl-D-alanine + UDP-N-acetyl-alpha-D-glucosamine = di-trans,octa-cis-undecaprenyl diphospho-[N-acetyl-alpha-D-glucosaminyl-(1-&gt;4)]-N-acetyl-alpha-D-muramoyl-L-alanyl-D-glutamyl-meso-2,6-diaminopimeloyl-D-alanyl-D-alanine + UDP + H(+). It functions in the pathway cell wall biogenesis; peptidoglycan biosynthesis. Its function is as follows. Cell wall formation. Catalyzes the transfer of a GlcNAc subunit on undecaprenyl-pyrophosphoryl-MurNAc-pentapeptide (lipid intermediate I) to form undecaprenyl-pyrophosphoryl-MurNAc-(pentapeptide)GlcNAc (lipid intermediate II). In Coxiella burnetii (strain CbuK_Q154) (Coxiella burnetii (strain Q154)), this protein is UDP-N-acetylglucosamine--N-acetylmuramyl-(pentapeptide) pyrophosphoryl-undecaprenol N-acetylglucosamine transferase.